The sequence spans 501 residues: Aldehyde dehydrogenase 1A1 (501 aa).

Residue S2 is modified to N-acetylserine. K91 and K128 each carry N6-acetyllysine. NAD(+) contacts are provided by residues 167 to 170, 193 to 196, 226 to 227, and 246 to 247; these read IPWN, KPAE, GP, and GS. K252 bears the N6-acetyllysine mark. Catalysis depends on E269, which acts as the Proton acceptor. 269–271 provides a ligand contact to NAD(+); it reads ELG. Residue C303 is the Nucleophile of the active site. The mediates interaction with PRMT3 stretch occupies residues 336–501; it reads LTPGVTQGPQ…VTVKISQKNS (166 aa). T337 bears the Phosphothreonine mark. 349-353 contributes to the NAD(+) binding site; that stretch reads EQYDK. An N6-acetyllysine mark is found at K353 and K367. NAD(+) is bound at residue 400–402; the sequence is EIF. Position 410 is an N6-acetyllysine (K410). At S413 the chain carries Phosphoserine. 3 positions are modified to N6-acetyllysine: K419, K435, and K495.

It belongs to the aldehyde dehydrogenase family. As to quaternary structure, homotetramer. Interacts with PRMT3; the interaction is direct, inhibits ALDH1A1 aldehyde dehydrogenase activity and is independent of the methyltransferase activity of PRMT3. In terms of processing, the N-terminus is blocked most probably by acetylation. Expressed by erythrocytes (at protein level).

It is found in the cytoplasm. Its subcellular location is the cytosol. The protein resides in the cell projection. The protein localises to the axon. The enzyme catalyses an aldehyde + NAD(+) + H2O = a carboxylate + NADH + 2 H(+). The catalysed reaction is all-trans-retinal + NAD(+) + H2O = all-trans-retinoate + NADH + 2 H(+). It catalyses the reaction 9-cis-retinal + NAD(+) + H2O = 9-cis-retinoate + NADH + 2 H(+). It carries out the reaction 11-cis-retinal + NAD(+) + H2O = 11-cis-retinoate + NADH + 2 H(+). The enzyme catalyses 13-cis-retinal + NAD(+) + H2O = 13-cis-retinoate + NADH + 2 H(+). The catalysed reaction is 3-deoxyglucosone + NAD(+) + H2O = 2-dehydro-3-deoxy-D-gluconate + NADH + 2 H(+). It catalyses the reaction (E)-4-hydroxynon-2-enal + NAD(+) + H2O = (E)-4-hydroxynon-2-enoate + NADH + 2 H(+). It carries out the reaction malonaldehyde + NAD(+) + H2O = 3-oxopropanoate + NADH + 2 H(+). The enzyme catalyses hexanal + NAD(+) + H2O = hexanoate + NADH + 2 H(+). The catalysed reaction is propanal + NAD(+) + H2O = propanoate + NADH + 2 H(+). It catalyses the reaction acetaldehyde + NAD(+) + H2O = acetate + NADH + 2 H(+). It carries out the reaction benzaldehyde + NAD(+) + H2O = benzoate + NADH + 2 H(+). The enzyme catalyses 4-aminobutanal + NAD(+) + H2O = 4-aminobutanoate + NADH + 2 H(+). It functions in the pathway cofactor metabolism; retinol metabolism. Inhibited by citral, disulfiram, and cyanamide. Activated by diethylstilbestrol. Inhibited by duocarmycin analogs. In terms of biological role, cytosolic dehydrogenase that catalyzes the irreversible oxidation of a wide range of aldehydes to their corresponding carboxylic acid. Functions downstream of retinol dehydrogenases and catalyzes the oxidation of retinaldehyde into retinoic acid, the second step in the oxidation of retinol/vitamin A into retinoic acid. This pathway is crucial to control the levels of retinol and retinoic acid, two important molecules which excess can be teratogenic and cytotoxic. Also oxidizes aldehydes resulting from lipid peroxidation like (E)-4-hydroxynon-2-enal/HNE, malonaldehyde and hexanal that form protein adducts and are highly cytotoxic. By participating for instance to the clearance of (E)-4-hydroxynon-2-enal/HNE in the lens epithelium prevents the formation of HNE-protein adducts and lens opacification. Also functions downstream of fructosamine-3-kinase in the fructosamine degradation pathway by catalyzing the oxidation of 3-deoxyglucosone, the carbohydrate product of fructosamine 3-phosphate decomposition, which is itself a potent glycating agent that may react with lysine and arginine side-chains of proteins. Also has an aminobutyraldehyde dehydrogenase activity and is probably part of an alternative pathway for the biosynthesis of GABA/4-aminobutanoate in midbrain, thereby playing a role in GABAergic synaptic transmission. In Homo sapiens (Human), this protein is Aldehyde dehydrogenase 1A1.